The chain runs to 286 residues: Ribose-phosphate pyrophosphokinase (286 aa).

ATP-binding positions include 34–36 and 91–92; these read DGE and RQ. 2 residues coordinate Mg(2+): His-124 and Asp-161. Lys-184 is a catalytic residue. Residues Arg-186, Asp-210, and 214 to 218 each bind D-ribose 5-phosphate; that span reads STGGT.

This sequence belongs to the ribose-phosphate pyrophosphokinase family. Class III (archaeal) subfamily. Requires Mg(2+) as cofactor.

The protein localises to the cytoplasm. It carries out the reaction D-ribose 5-phosphate + ATP = 5-phospho-alpha-D-ribose 1-diphosphate + AMP + H(+). It participates in metabolic intermediate biosynthesis; 5-phospho-alpha-D-ribose 1-diphosphate biosynthesis; 5-phospho-alpha-D-ribose 1-diphosphate from D-ribose 5-phosphate (route I): step 1/1. Involved in the biosynthesis of the central metabolite phospho-alpha-D-ribosyl-1-pyrophosphate (PRPP) via the transfer of pyrophosphoryl group from ATP to 1-hydroxyl of ribose-5-phosphate (Rib-5-P). The sequence is that of Ribose-phosphate pyrophosphokinase from Thermoplasma acidophilum (strain ATCC 25905 / DSM 1728 / JCM 9062 / NBRC 15155 / AMRC-C165).